The primary structure comprises 101 residues: Cell cycle protein GpsB (101 aa).

Residues Leu34–Arg71 adopt a coiled-coil conformation.

The protein belongs to the GpsB family. In terms of assembly, forms polymers through the coiled coil domains. Interacts with PBP1, MreC and EzrA.

It is found in the cytoplasm. In terms of biological role, divisome component that associates with the complex late in its assembly, after the Z-ring is formed, and is dependent on DivIC and PBP2B for its recruitment to the divisome. Together with EzrA, is a key component of the system that regulates PBP1 localization during cell cycle progression. Its main role could be the removal of PBP1 from the cell pole after pole maturation is completed. Also contributes to the recruitment of PBP1 to the division complex. Not essential for septum formation. The sequence is that of Cell cycle protein GpsB from Bacillus pumilus (strain SAFR-032).